The sequence spans 906 residues: MSASTRNKHSKIHGNEKLDITTDEFDRIRQALSNEEFRKLFFDYVDEIQDPENRKLYEKEITQLEKERGVDVTFIHPQPGFVVKTSIDGELKCFINIASSTVVERPNNEVSVNSQTGQKGLSWSIPMAQTPPRDDLDANNKQCKVFDVVFHPDALHLGKRNAQFRQCLIDTALDGVEREYKVNLDRANLKFPKLDYKGLARPTVLRKLSKDATAEELEPHPLEHMYPKKPAANADQPKVLPMKTKVTPAPTFAVPKYSIKHSHDVDLAEYTDELDAKLQVTMPRALVVEIELPLLSSTADCQLDVTEKSVYLLSERQGAKYRLKLDLPYTVNDKAGNARFDTEHRRLCITLPVVRSTAREQRNLHDTVRVLTREDSGVELNSNGESPVEDEAEAEVEADAIVELQSHDQRDVSDAFPPTAVVSPRSFLKDNLHYKLPASFDCNILDNVIAFVLHVPNVQPDSVQTLQQARSLHLQFASMGSGYYPTHYAFLVQLPDGLEPQLQIDHIDVDAADENVVLRLYMNENCMLLPSYLAGPDSTDLKEYPVFGHFNNNNNNEKEYEGCSLASEKSLYINMDHNDLEHALEVSIMPQESTDPLDSIELLQQQQQQLQQLQQQKKLNKKQRKRNKKQRSLSESACEELKAAQEELQLQHEKQQQQQQLPSTPKDASPERLQNVSQPVDTLKLPQRKQRSYSECNESSSCVQRGILKRFSRYGPRPSISDSCSSIDDCSSTYSCSMDAPGMGFSQSFGGIPEERSGEGDVGLSESCKKTVRFNDHIMKQVFRLDSSILGQRKKNQKRRDCKLRAQQRRLSEGDSADYEEVEHGNGQQPPAHKTAANAQYFKQPNNNNGHDQDKNKKLSMHDSGLDLTNNNNHNNEEETKRNEADAKNAMMFEMDDDDEDEDEDM.

Position 376 is a phosphoserine (serine 376). 2 disordered regions span residues 614–691 and 793–906; these read QQQK…RKQR and RKKN…DEDM. The span at 618–631 shows a compositional bias: basic residues; sequence KLNKKQRKRNKKQR. Positions 639 to 655 are enriched in basic and acidic residues; it reads EELKAAQEELQLQHEKQ. Over residues 793-808 the composition is skewed to basic residues; it reads RKKNQKRRDCKLRAQQ. Serine 812 carries the post-translational modification Phosphoserine. The segment covering 837–850 has biased composition (polar residues); sequence ANAQYFKQPNNNNG. Basic and acidic residues-rich tracts occupy residues 851-865 and 875-887; these read HDQD…HDSG and NNEE…EADA. A compositionally biased stretch (acidic residues) spans 894-906; that stretch reads EMDDDDEDEDEDM.

It belongs to the PIH1 family. Kintoun subfamily. In terms of assembly, interacts with Pp1alpha-96A, Pp1-87B, Pp1-13C and flw.

The protein localises to the cytoplasm. Its function is as follows. Required for cytoplasmic pre-assembly of axonemal dyneins, thereby playing a central role in motility in cilia and flagella. Involved in pre-assembly of dynein arm complexes in the cytoplasm before intraflagellar transport loads them for the ciliary compartment. The protein is Protein kintoun of Drosophila virilis (Fruit fly).